Here is a 109-residue protein sequence, read N- to C-terminus: Fluoride-specific ion channel FluC 1 (109 aa).

The next 3 membrane-spanning stretches (helical) occupy residues 21-41, 52-72, and 84-104; these read LFIN…GFFI, IILS…YFLY, and IIFC…GFWI.

The protein belongs to the fluoride channel Fluc/FEX (TC 1.A.43) family.

The protein resides in the cell inner membrane. The catalysed reaction is fluoride(in) = fluoride(out). Functionally, fluoride-specific ion channel. Important for reducing fluoride concentration in the cell, thus reducing its toxicity. The polypeptide is Fluoride-specific ion channel FluC 1 (Prochlorococcus marinus (strain MIT 9312)).